We begin with the raw amino-acid sequence, 141 residues long: Large ribosomal subunit protein uL16 (141 aa).

The protein belongs to the universal ribosomal protein uL16 family. Part of the 50S ribosomal subunit.

Binds 23S rRNA and is also seen to make contacts with the A and possibly P site tRNAs. The protein is Large ribosomal subunit protein uL16 of Rhodospirillum centenum (strain ATCC 51521 / SW).